The sequence spans 420 residues: Diaminopimelate decarboxylase (420 aa).

An N6-(pyridoxal phosphate)lysine modification is found at Lys54. His191 contributes to the substrate binding site. Residues Gly227 and 268–271 contribute to the pyridoxal 5'-phosphate site; that span reads EPGR. Substrate contacts are provided by Arg271, Arg307, and Tyr311. Catalysis depends on Cys342, which acts as the Proton donor. 2 residues coordinate substrate: Glu343 and Tyr378. Tyr378 contacts pyridoxal 5'-phosphate.

Belongs to the Orn/Lys/Arg decarboxylase class-II family. LysA subfamily. The cofactor is pyridoxal 5'-phosphate.

It carries out the reaction meso-2,6-diaminopimelate + H(+) = L-lysine + CO2. Its pathway is amino-acid biosynthesis; L-lysine biosynthesis via DAP pathway; L-lysine from DL-2,6-diaminopimelate: step 1/1. With respect to regulation, is activated by 2,3-dimercaptopropan-1-ol. Its function is as follows. Specifically catalyzes the decarboxylation of meso-diaminopimelate (meso-DAP) to L-lysine. Is not active against the DD- or LL-isomers of diaminopimelate. In Escherichia coli (strain K12), this protein is Diaminopimelate decarboxylase.